Reading from the N-terminus, the 918-residue chain is Isoleucine--tRNA ligase (918 aa).

The 'HIGH' region motif lies at 57–67 (PYANGHIHIGH). Glu-564 provides a ligand contact to L-isoleucyl-5'-AMP. The 'KMSKS' region signature appears at 605–609 (KMSKS). Residue Lys-608 coordinates ATP. Residues Cys-888, Cys-891, Cys-903, and Cys-906 each contribute to the Zn(2+) site.

This sequence belongs to the class-I aminoacyl-tRNA synthetase family. IleS type 1 subfamily. In terms of assembly, monomer. It depends on Zn(2+) as a cofactor.

Its subcellular location is the cytoplasm. It catalyses the reaction tRNA(Ile) + L-isoleucine + ATP = L-isoleucyl-tRNA(Ile) + AMP + diphosphate. Catalyzes the attachment of isoleucine to tRNA(Ile). As IleRS can inadvertently accommodate and process structurally similar amino acids such as valine, to avoid such errors it has two additional distinct tRNA(Ile)-dependent editing activities. One activity is designated as 'pretransfer' editing and involves the hydrolysis of activated Val-AMP. The other activity is designated 'posttransfer' editing and involves deacylation of mischarged Val-tRNA(Ile). This Nitratiruptor sp. (strain SB155-2) protein is Isoleucine--tRNA ligase.